A 166-amino-acid chain; its full sequence is Lipoprotein signal peptidase (166 aa).

Transmembrane regions (helical) follow at residues 12 to 32 (WLWL…LILQ), 70 to 90 (WFFA…MYRS), and 102 to 122 (ALII…GFVV). Catalysis depends on residues Asp-123 and Asp-141. Residues 137–157 (FNLADTAICIGAALIVLEGFL) form a helical membrane-spanning segment.

The protein belongs to the peptidase A8 family.

The protein localises to the cell inner membrane. The catalysed reaction is Release of signal peptides from bacterial membrane prolipoproteins. Hydrolyzes -Xaa-Yaa-Zaa-|-(S,diacylglyceryl)Cys-, in which Xaa is hydrophobic (preferably Leu), and Yaa (Ala or Ser) and Zaa (Gly or Ala) have small, neutral side chains.. The protein operates within protein modification; lipoprotein biosynthesis (signal peptide cleavage). Its function is as follows. This protein specifically catalyzes the removal of signal peptides from prolipoproteins. The chain is Lipoprotein signal peptidase from Salmonella typhi.